The chain runs to 319 residues: Pantothenate kinase (319 aa).

Residue 97 to 104 (GSVAVGKS) coordinates ATP.

It belongs to the prokaryotic pantothenate kinase family.

It is found in the cytoplasm. It carries out the reaction (R)-pantothenate + ATP = (R)-4'-phosphopantothenate + ADP + H(+). The protein operates within cofactor biosynthesis; coenzyme A biosynthesis; CoA from (R)-pantothenate: step 1/5. This is Pantothenate kinase from Mesorhizobium japonicum (strain LMG 29417 / CECT 9101 / MAFF 303099) (Mesorhizobium loti (strain MAFF 303099)).